Consider the following 142-residue polypeptide: Large ribosomal subunit protein uL13 (142 aa).

Belongs to the universal ribosomal protein uL13 family. As to quaternary structure, part of the 50S ribosomal subunit.

This protein is one of the early assembly proteins of the 50S ribosomal subunit, although it is not seen to bind rRNA by itself. It is important during the early stages of 50S assembly. In Salmonella agona (strain SL483), this protein is Large ribosomal subunit protein uL13.